The chain runs to 823 residues: Adhesion G protein-coupled receptor E2 (823 aa).

The N-terminal stretch at Met1–Thr23 is a signal peptide. Topologically, residues Gln24–Thr540 are extracellular. The 42-residue stretch at Asp25–Asp66 folds into the EGF-like 1 domain. Cystine bridges form between Cys29–Cys39, Cys33–Cys45, Cys47–Cys65, Cys71–Cys85, Cys79–Cys94, Cys96–Cys117, Cys123–Cys136, Cys130–Cys145, Cys147–Cys161, Cys167–Cys180, Cys174–Cys189, Cys191–Cys210, Cys216–Cys229, Cys223–Cys238, and Cys240–Cys259. Asn41 is a glycosylation site (N-linked (GlcNAc...) asparagine). One can recognise an EGF-like 2; calcium-binding domain in the interval Asp67–Gln118. Asn111 carries an N-linked (GlcNAc...) asparagine glycan. The 44-residue stretch at Asp119–Thr162 folds into the EGF-like 3; calcium-binding domain. In terms of domain architecture, EGF-like 4; calcium-binding spans Asp163–Glu211. Asn206 carries N-linked (GlcNAc...) asparagine glycosylation. The EGF-like 5; calcium-binding domain maps to Asp212 to Glu260. Residues Asn298, Asn347, Asn354, Asn456, and Asn460 are each glycosylated (N-linked (GlcNAc...) asparagine). A GAIN-B domain is found at Asn354–Gln530. Disulfide bonds link Cys482–Cys512 and Cys500–Cys514. A GPS region spans residues Cys482–Gln530. The helical transmembrane segment at Tyr541–Cys561 threads the bilayer. The Cytoplasmic segment spans residues Lys562 to Thr569. A helical transmembrane segment spans residues Ser570 to Ile590. The Extracellular segment spans residues Asp591 to Thr605. The helical transmembrane segment at Leu606–Leu626 threads the bilayer. Topologically, residues Thr627–Lys644 are cytoplasmic. The helical transmembrane segment at Lys645 to Ser665 threads the bilayer. Residues Arg666–Gly683 lie on the Extracellular side of the membrane. A helical transmembrane segment spans residues Phe684–Leu704. Residues Val705–Thr735 are Cytoplasmic-facing. The chain crosses the membrane as a helical span at residues Ala736–Ala756. The Extracellular segment spans residues Arg757–Ala760. The helical transmembrane segment at Tyr761–Leu781 threads the bilayer. Residues Ser782–Asn823 are Cytoplasmic-facing.

Belongs to the G-protein coupled receptor 2 family. Adhesion G-protein coupled receptor (ADGR) subfamily. In terms of assembly, forms a heterodimer, consisting of a large extracellular region non-covalently linked to a seven-transmembrane moiety. Interacts with chondroitin sulfate; the interaction with chondroitin sulfate is calcium-dependent. Interacts with CD55. In terms of processing, autoproteolytically cleaved into 2 subunits, an extracellular alpha subunit and a seven-transmembrane beta subunit. Expression is restricted to myeloid cells. Highest expression was found in peripheral blood leukocytes, followed by spleen and lymph nodes, with intermediate to low levels in thymus, bone marrow, fetal liver, placenta, and lung, and no expression in heart, brain, skeletal muscle, kidney, or pancreas. Expression is also detected in monocyte/macrophage and Jurkat cell lines but not in other cell lines tested. High expression in mast cells.

Its subcellular location is the cell membrane. The protein localises to the cell projection. The protein resides in the ruffle membrane. Functionally, cell surface receptor that binds to the chondroitin sulfate moiety of glycosaminoglycan chains and promotes cell attachment. Promotes granulocyte chemotaxis, degranulation and adhesion. In macrophages, promotes the release of inflammatory cytokines, including IL8 and TNF. Signals probably through G-proteins. Is a regulator of mast cell degranulation. In Homo sapiens (Human), this protein is Adhesion G protein-coupled receptor E2.